Here is a 179-residue protein sequence, read N- to C-terminus: Nicotinamide-nucleotide adenylyltransferase (179 aa).

It belongs to the archaeal NMN adenylyltransferase family.

The protein resides in the cytoplasm. The catalysed reaction is beta-nicotinamide D-ribonucleotide + ATP + H(+) = diphosphate + NAD(+). It functions in the pathway cofactor biosynthesis; NAD(+) biosynthesis; NAD(+) from nicotinamide D-ribonucleotide: step 1/1. The protein is Nicotinamide-nucleotide adenylyltransferase of Thermoplasma acidophilum (strain ATCC 25905 / DSM 1728 / JCM 9062 / NBRC 15155 / AMRC-C165).